The following is a 61-amino-acid chain: Small ribosomal subunit protein uS14 (61 aa).

Positions 24, 27, 40, and 43 each coordinate Zn(2+).

It belongs to the universal ribosomal protein uS14 family. Zinc-binding uS14 subfamily. As to quaternary structure, part of the 30S ribosomal subunit. Contacts proteins S3 and S10. Requires Zn(2+) as cofactor.

Functionally, binds 16S rRNA, required for the assembly of 30S particles and may also be responsible for determining the conformation of the 16S rRNA at the A site. The sequence is that of Small ribosomal subunit protein uS14 from Campylobacter fetus subsp. fetus (strain 82-40).